The chain runs to 203 residues: Thymidylate kinase (203 aa).

7-14 serves as a coordination point for ATP; the sequence is GGEGAGKT.

It belongs to the thymidylate kinase family.

The enzyme catalyses dTMP + ATP = dTDP + ADP. Phosphorylation of dTMP to form dTDP in both de novo and salvage pathways of dTTP synthesis. This Chlamydia trachomatis serovar L2 (strain ATCC VR-902B / DSM 19102 / 434/Bu) protein is Thymidylate kinase.